A 671-amino-acid chain; its full sequence is Copper amine oxidase 1 (671 aa).

Residues 3 to 106 form an N2 region; that stretch reads PHPLAILSEE…QHRVVGKEHH (104 aa). Positions 107–211 are N3; that stretch reads ASLTLSEFDT…DRPATGGKGE (105 aa). Residue 319 to 330 coordinates substrate; sequence AFDFGDGGGGNM. Aspartate 321 serves as the catalytic Proton acceptor. Cysteines 340 and 366 form a disulfide. Residue 402–407 participates in substrate binding; it reads LANYEY. Tyrosine 405 acts as the Schiff-base intermediate with substrate; via topaquinone in catalysis. 2',4',5'-topaquinone is present on tyrosine 405. Cu cation is bound by residues histidine 455 and histidine 457. Residue aspartate 464 participates in Mn(2+) binding. Asparagine 471 is a glycosylation site (N-linked (GlcNAc...) asparagine). Aspartate 606 lines the Mn(2+) pocket. Histidine 617 lines the Cu cation pocket.

This sequence belongs to the copper/topaquinone oxidase family. In terms of assembly, homodimer. Requires Cu cation as cofactor. It depends on Zn(2+) as a cofactor. The cofactor is L-topaquinone. Mn(2+) serves as cofactor. Topaquinone (TPQ) is generated by copper-dependent autoxidation of a specific tyrosyl residue.

The catalysed reaction is histamine + O2 + H2O = imidazole-4-acetaldehyde + H2O2 + NH4(+). The chain is Copper amine oxidase 1 (AO-I) from Aspergillus niger.